Here is a 164-residue protein sequence, read N- to C-terminus: MTRSKSAPETTRAARQARIVAILSSAQVRSQSELAALLADEGIEVTQATLSRDLEELGAVKLRGADGGVGVYMVPEDGSPVRGVSGGTARLSRLLSELLVSADASANLAVLRTPPGAADYLASAIDRAALPYVVGTIAGDDTVFVAARDPMTGAELADTLEKLT.

It belongs to the ArgR family.

Its subcellular location is the cytoplasm. Its pathway is amino-acid biosynthesis; L-arginine biosynthesis [regulation]. Regulates arginine biosynthesis genes. In Mycobacterium avium (strain 104), this protein is Arginine repressor.